Here is a 307-residue protein sequence, read N- to C-terminus: Tyrosine recombinase XerC (307 aa).

Positions 6–89 constitute a Core-binding (CB) domain; sequence HNTLQTVNTF…TLRTFFRYLM (84 aa). Residues 110–293 enclose the Tyr recombinase domain; it reads RLPKALDVDQ…DFQHLAQVYD (184 aa). Active-site residues include R151, K175, H245, R248, and H271. The O-(3'-phospho-DNA)-tyrosine intermediate role is filled by Y280.

It belongs to the 'phage' integrase family. XerC subfamily. As to quaternary structure, forms a cyclic heterotetrameric complex composed of two molecules of XerC and two molecules of XerD.

It localises to the cytoplasm. Its function is as follows. Site-specific tyrosine recombinase, which acts by catalyzing the cutting and rejoining of the recombining DNA molecules. The XerC-XerD complex is essential to convert dimers of the bacterial chromosome into monomers to permit their segregation at cell division. It also contributes to the segregational stability of plasmids. The polypeptide is Tyrosine recombinase XerC (Alcanivorax borkumensis (strain ATCC 700651 / DSM 11573 / NCIMB 13689 / SK2)).